Here is a 565-residue protein sequence, read N- to C-terminus: Oxygen-dependent choline dehydrogenase (565 aa).

6–35 (DYIIVGAGSAGNTLATRLTEDAGVTVLLLE) lines the FAD pocket. His475 (proton acceptor) is an active-site residue.

It belongs to the GMC oxidoreductase family. Requires FAD as cofactor.

It carries out the reaction choline + A = betaine aldehyde + AH2. It catalyses the reaction betaine aldehyde + NAD(+) + H2O = glycine betaine + NADH + 2 H(+). Its pathway is amine and polyamine biosynthesis; betaine biosynthesis via choline pathway; betaine aldehyde from choline (cytochrome c reductase route): step 1/1. Functionally, involved in the biosynthesis of the osmoprotectant glycine betaine. Catalyzes the oxidation of choline to betaine aldehyde and betaine aldehyde to glycine betaine at the same rate. The sequence is that of Oxygen-dependent choline dehydrogenase from Pseudomonas putida (strain GB-1).